Here is a 204-residue protein sequence, read N- to C-terminus: MRYSSGAVEALIEEFAKLPGIGRKTAQRLTMHVLQERRGEVEKLAAALIDVKEKVVRCSICQNITDLGTDPCLLCTSTGRDRSVICVVESPTEVLAFEKTGHYKGLYHVLHGVISPLDGVGPDDIKVRELLARISPDSEGGVREVVLALNPTVEGETTSLYISKLLKPLGINVTRIARGIPVGAELEFIDEATLSRAMDGRSAV.

A C4-type zinc finger spans residues 58–75 (CSICQNITDLGTDPCLLC). The Toprim domain maps to 83–181 (SVICVVESPT…NVTRIARGIP (99 aa)).

Belongs to the RecR family.

Its function is as follows. May play a role in DNA repair. It seems to be involved in an RecBC-independent recombinational process of DNA repair. It may act with RecF and RecO. In Chlorobaculum parvum (strain DSM 263 / NCIMB 8327) (Chlorobium vibrioforme subsp. thiosulfatophilum), this protein is Recombination protein RecR.